A 335-amino-acid chain; its full sequence is Ornithine carbamoyltransferase (335 aa).

Carbamoyl phosphate is bound by residues 57–60 (STRT), Arg-108, and 135–138 (HPTQ). Residues Asn-168, Asp-232, and 236 to 237 (SM) contribute to the L-ornithine site. Residues 274-275 (CL) and Arg-319 each bind carbamoyl phosphate.

It belongs to the aspartate/ornithine carbamoyltransferase superfamily. OTCase family.

It localises to the cytoplasm. The catalysed reaction is carbamoyl phosphate + L-ornithine = L-citrulline + phosphate + H(+). It functions in the pathway amino-acid degradation; L-arginine degradation via ADI pathway; carbamoyl phosphate from L-arginine: step 2/2. Reversibly catalyzes the transfer of the carbamoyl group from carbamoyl phosphate (CP) to the N(epsilon) atom of ornithine (ORN) to produce L-citrulline. The sequence is that of Ornithine carbamoyltransferase from Limosilactobacillus reuteri (strain DSM 20016) (Lactobacillus reuteri).